Here is a 131-residue protein sequence, read N- to C-terminus: Phosphoribosyl-AMP cyclohydrolase (131 aa).

A Mg(2+)-binding site is contributed by D80. C81 is a Zn(2+) binding site. Positions 82 and 84 each coordinate Mg(2+). Residues C98 and C105 each coordinate Zn(2+).

This sequence belongs to the PRA-CH family. In terms of assembly, homodimer. Mg(2+) is required as a cofactor. Zn(2+) serves as cofactor.

It localises to the cytoplasm. It carries out the reaction 1-(5-phospho-beta-D-ribosyl)-5'-AMP + H2O = 1-(5-phospho-beta-D-ribosyl)-5-[(5-phospho-beta-D-ribosylamino)methylideneamino]imidazole-4-carboxamide. The protein operates within amino-acid biosynthesis; L-histidine biosynthesis; L-histidine from 5-phospho-alpha-D-ribose 1-diphosphate: step 3/9. Functionally, catalyzes the hydrolysis of the adenine ring of phosphoribosyl-AMP. This Azoarcus sp. (strain BH72) protein is Phosphoribosyl-AMP cyclohydrolase.